A 138-amino-acid chain; its full sequence is Endoribonuclease YbeY (138 aa).

3 residues coordinate Zn(2+): His-105, His-109, and Asp-115.

The protein belongs to the endoribonuclease YbeY family. Requires Zn(2+) as cofactor.

Its subcellular location is the cytoplasm. Its function is as follows. Single strand-specific metallo-endoribonuclease involved in late-stage 70S ribosome quality control and in maturation of the 3' terminus of the 16S rRNA. The polypeptide is Endoribonuclease YbeY (Chlorobium phaeobacteroides (strain BS1)).